The chain runs to 745 residues: Junction plakoglobin (745 aa).

Residue M1 is modified to N-acetylmethionine. Residue T14 is glycosylated (O-linked (GlcNAc) threonine). Phosphoserine is present on residues S99 and S125. ARM repeat units follow at residues 132–171 (NYQDDAELATRALPELTKLLNDEDPVVVTKAAMIVNQLSK), 172–215 (KEAS…LSHH), 216–255 (REGLLAIFKSGGIPALVRMLSSPVESVLFYAITTLHNLLL), 258–297 (EGAKMAVRLADGLQKMVPLLNKNNPKFLAITTDCLQLLAY), 298–341 (GNQE…LSVC), 342–381 (PSNKPAIVEAGGMQALGKHLTSNSPRLVQNCLWTLRNLSD), 383–420 (ATKQEGLESVLKILVNQLSVDDVNVLTCATGTLSNLTC), 423–464 (SKNK…HLTS), 470–510 (EMAQ…NLAL), 512–551 (PANHAPLQEAAVIPRLVQLLVKAHQDAQRHVAAGTQQPYT), 574–613 (PMNRMEIFRLNTIPLFVQLLYSSVENIQRVAAGVLCELAQ), and 615–661 (KEAA…PDYR). The tract at residues 132–297 (NYQDDAELAT…TTDCLQLLAY (166 aa)) is interaction with DSC1 and DSG1. Residue S182 is modified to Phosphoserine. Residues 574-661 (PMNRMEIFRL…ISEDKNPDYR (88 aa)) are interaction with DSC1. S665 and S730 each carry phosphoserine.

Belongs to the beta-catenin family. In terms of assembly, homodimer. Component of an E-cadherin/catenin adhesion complex composed of at least E-cadherin/CDH1 and gamma-catenin/JUP, and possibly alpha-catenin/CTNNA1; the complex is located to adherens junctions. The stable association of CTNNA1 is controversial as CTNNA1 was shown not to bind to F-actin when assembled in the complex. Interacts with MUC1. Interacts with CAV1. Interacts with PTPRJ. Interacts with DSG1. Interacts with DSC1 and DSC2. Interacts with PKP2. Interacts with PKP3 (via N-terminus); the interaction is required for PKP3 localization to desmosome cell-cell junctions. Interacts with DSG4. Post-translationally, may be phosphorylated by FER.

It localises to the cell junction. Its subcellular location is the adherens junction. The protein localises to the desmosome. The protein resides in the cytoplasm. It is found in the cytoskeleton. It localises to the cell membrane. Its subcellular location is the nucleus. Functionally, common junctional plaque protein. The membrane-associated plaques are architectural elements in an important strategic position to influence the arrangement and function of both the cytoskeleton and the cells within the tissue. The presence of plakoglobin in both the desmosomes and in the intermediate junctions suggests that it plays a central role in the structure and function of submembranous plaques. Acts as a substrate for VE-PTP and is required by it to stimulate VE-cadherin function in endothelial cells. Can replace beta-catenin in E-cadherin/catenin adhesion complexes which are proposed to couple cadherins to the actin cytoskeleton. In Bos taurus (Bovine), this protein is Junction plakoglobin.